Consider the following 1111-residue polypeptide: MASTPPQTSKKVRNNSGSGQTVKFARRTSSGRYVSLSRDNIELSGELSGDYSNYTVHIPPTPDNQPMATKAEEQYVSNSLFTGGFNSVTRAHLMDKVIDSDVTHPQMAGAKGSSCAMPACDGNVMKDERGKDVMPCECRFKICRDCFMDAQKETGLCPGCKEQYKIGDLDDDTPDYSSGALPLPAPGKDQRGNNNNMSMMKRNQNGEFDHNRWLFETQGTYGYGNAYWPQDEMYGDDMDEGMRGGMVETADKPWRPLSRRIPIPAAIISPYRLLIVIRFVVLCFFLTWRIRNPNEDAIWLWLMSIICELWFGFSWILDQIPKLCPINRSTDLEVLRDKFDMPSPSNPTGRSDLPGIDLFVSTADPEKEPPLVTANTILSILAVDYPVEKVSCYLSDDGGALLSFEAMAEAASFADLWVPFCRKHNIEPRNPDSYFSLKIDPTKNKSRIDFVKDRRKIKREYDEFKVRINGLPDSIRRRSDAFNAREEMKALKQMRESGGDPTEPVKVPKATWMADGTHWPGTWAASTREHSKGDHAGILQVMLKPPSSDPLIGNSDDKVIDFSDTDTRLPMFVYVSREKRPGYDHNKKAGAMNALVRASAILSNGPFILNLDCDHYIYNCKAVREGMCFMMDRGGEDICYIQFPQRFEGIDPSDRYANNNTVFFDGNMRALDGVQGPVYVGTGTMFRRFALYGFDPPNPDKLLEKKESETEALTTSDFDPDLDVTQLPKRFGNSTLLAESIPIAEFQGRPLADHPAVKYGRPPGALRVPRDPLDATTVAESVSVISCWYEDKTEWGDRVGWIYGSVTEDVVTGYRMHNRGWRSVYCITKRDSFRGSAPINLTDRLHQVLRWATGSVEIFFSRNNAILASKRLKFLQRLAYLNVGIYPFTSLFLILYCFLPAFSLFSGQFIVRTLSISFLVYLLMITICLIGLAVLEVKWSGIGLEEWWRNEQWWLISGTSSHLYAVVQGVLKVIAGIEISFTLTTKSGGDDNEDIYADLYIVKWSSLMIPPIVIAMVNIIAIVVAFIRTIYQAVPQWSKLIGGAFFSFWVLAHLYPFAKGLMGRRGKTPTIVFVWAGLIAITISLLWTAINPNTGPAAAAEGVGGGGFQFP.

Disordered stretches follow at residues 1-26 (MAST…KFAR) and 175-202 (DYSS…MMKR). Residues 192 to 202 (GNNNNMSMMKR) are compositionally biased toward polar residues. 2 helical membrane-spanning segments follow: residues 266-286 (AIIS…CFFL) and 297-317 (AIWL…SWIL). Residues D397 and D809 contribute to the active site. 6 helical membrane passes run 891–911 (LFLI…QFIV), 914–934 (LSIS…GLAV), 963–983 (LYAV…SFTL), 1007–1027 (LMIP…VAFI), 1040–1060 (LIGG…FAKG), and 1070–1090 (TIVF…WTAI).

Belongs to the glycosyltransferase 2 family. Plant cellulose synthase-like D subfamily.

The protein localises to the golgi apparatus membrane. Its function is as follows. Thought to be a Golgi-localized beta-glycan synthase that polymerize the backbones of noncellulosic polysaccharides (hemicelluloses) of plant cell wall. This is Cellulose synthase-like protein D4 (CSLD4) from Arabidopsis thaliana (Mouse-ear cress).